The sequence spans 210 residues: Large ribosomal subunit protein uL3 (210 aa).

The protein belongs to the universal ribosomal protein uL3 family. Part of the 50S ribosomal subunit. Forms a cluster with proteins L14 and L19.

Functionally, one of the primary rRNA binding proteins, it binds directly near the 3'-end of the 23S rRNA, where it nucleates assembly of the 50S subunit. The sequence is that of Large ribosomal subunit protein uL3 from Pseudothermotoga lettingae (strain ATCC BAA-301 / DSM 14385 / NBRC 107922 / TMO) (Thermotoga lettingae).